The primary structure comprises 122 residues: NADH-quinone oxidoreductase subunit A (122 aa).

A run of 3 helical transmembrane segments spans residues 10-30 (MIVL…LTLG), 66-86 (IFAL…PWAV), and 91-111 (LGLF…VGLA).

It belongs to the complex I subunit 3 family. As to quaternary structure, NDH-1 is composed of 14 different subunits. Subunits NuoA, H, J, K, L, M, N constitute the membrane sector of the complex.

Its subcellular location is the cell membrane. The enzyme catalyses a quinone + NADH + 5 H(+)(in) = a quinol + NAD(+) + 4 H(+)(out). Functionally, NDH-1 shuttles electrons from NADH, via FMN and iron-sulfur (Fe-S) centers, to quinones in the respiratory chain. The immediate electron acceptor for the enzyme in this species is believed to be a menaquinone. Couples the redox reaction to proton translocation (for every two electrons transferred, four hydrogen ions are translocated across the cytoplasmic membrane), and thus conserves the redox energy in a proton gradient. The protein is NADH-quinone oxidoreductase subunit A of Bacillus thuringiensis subsp. konkukian (strain 97-27).